Consider the following 76-residue polypeptide: Large ribosomal subunit protein uL29 (76 aa).

This sequence belongs to the universal ribosomal protein uL29 family.

This is Large ribosomal subunit protein uL29 from Corynebacterium kroppenstedtii (strain DSM 44385 / JCM 11950 / CIP 105744 / CCUG 35717).